The chain runs to 647 residues: Threonine--tRNA ligase (647 aa).

Residues 1–61 (MINITFPDGA…TEDGSIEIVT (61 aa)) enclose the TGS domain. The tract at residues 242–540 (DHRKLGKELD…LIENYKGAFP (299 aa)) is catalytic. Zn(2+) is bound by residues C336, H387, and H517.

The protein belongs to the class-II aminoacyl-tRNA synthetase family. In terms of assembly, homodimer. Requires Zn(2+) as cofactor.

The protein localises to the cytoplasm. The enzyme catalyses tRNA(Thr) + L-threonine + ATP = L-threonyl-tRNA(Thr) + AMP + diphosphate + H(+). In terms of biological role, catalyzes the attachment of threonine to tRNA(Thr) in a two-step reaction: L-threonine is first activated by ATP to form Thr-AMP and then transferred to the acceptor end of tRNA(Thr). Also edits incorrectly charged L-seryl-tRNA(Thr). The polypeptide is Threonine--tRNA ligase (Streptococcus pneumoniae serotype 4 (strain ATCC BAA-334 / TIGR4)).